The primary structure comprises 955 residues: Protein translocase subunit SecA (955 aa).

Residues Q87, 105–109 (GEGKT), and D494 each bind ATP. A disordered region spans residues 861 to 955 (ASPAPAAPRP…KKAPRTKRKR (95 aa)). Residues 874 to 888 (QEAAQQAQGTAAPSA) show a composition bias toward low complexity. Residues 943–955 (SKGKKAPRTKRKR) show a composition bias toward basic residues.

It belongs to the SecA family. In terms of assembly, monomer and homodimer. Part of the essential Sec protein translocation apparatus which comprises SecA, SecYEG and auxiliary proteins SecDF. Other proteins may also be involved.

The protein resides in the cell membrane. Its subcellular location is the cytoplasm. It carries out the reaction ATP + H2O + cellular proteinSide 1 = ADP + phosphate + cellular proteinSide 2.. Part of the Sec protein translocase complex. Interacts with the SecYEG preprotein conducting channel. Has a central role in coupling the hydrolysis of ATP to the transfer of proteins into and across the cell membrane, serving as an ATP-driven molecular motor driving the stepwise translocation of polypeptide chains across the membrane. The sequence is that of Protein translocase subunit SecA from Rhodococcus jostii (strain RHA1).